The following is a 642-amino-acid chain: Threonine--tRNA ligase (642 aa).

Positions 1-61 (MPVITLPDGS…ENDAQLSIIT (61 aa)) constitute a TGS domain. The segment at 243-534 (DHRKIGKQLD…LTEEFAGFFP (292 aa)) is catalytic. Lys-286 bears the N6-acetyllysine mark. The Zn(2+) site is built by Cys-334, His-385, and His-511.

It belongs to the class-II aminoacyl-tRNA synthetase family. In terms of assembly, homodimer. The cofactor is Zn(2+).

The protein resides in the cytoplasm. The enzyme catalyses tRNA(Thr) + L-threonine + ATP = L-threonyl-tRNA(Thr) + AMP + diphosphate + H(+). In terms of biological role, catalyzes the attachment of threonine to tRNA(Thr) in a two-step reaction: L-threonine is first activated by ATP to form Thr-AMP and then transferred to the acceptor end of tRNA(Thr). Also edits incorrectly charged L-seryl-tRNA(Thr). This Shigella flexneri serotype 5b (strain 8401) protein is Threonine--tRNA ligase.